We begin with the raw amino-acid sequence, 273 residues long: Ribosomal RNA small subunit methyltransferase A (273 aa).

Asparagine 18, leucine 20, glycine 45, glutamate 66, aspartate 91, and asparagine 113 together coordinate S-adenosyl-L-methionine.

It belongs to the class I-like SAM-binding methyltransferase superfamily. rRNA adenine N(6)-methyltransferase family. RsmA subfamily.

The protein localises to the cytoplasm. The catalysed reaction is adenosine(1518)/adenosine(1519) in 16S rRNA + 4 S-adenosyl-L-methionine = N(6)-dimethyladenosine(1518)/N(6)-dimethyladenosine(1519) in 16S rRNA + 4 S-adenosyl-L-homocysteine + 4 H(+). Functionally, specifically dimethylates two adjacent adenosines (A1518 and A1519) in the loop of a conserved hairpin near the 3'-end of 16S rRNA in the 30S particle. May play a critical role in biogenesis of 30S subunits. This Shigella dysenteriae serotype 1 (strain Sd197) protein is Ribosomal RNA small subunit methyltransferase A.